A 515-amino-acid chain; its full sequence is Bifunctional purine biosynthesis protein PurH (515 aa).

The MGS-like domain occupies 1–145 (MTKRALISVS…KNHASVTVVV (145 aa)).

It belongs to the PurH family.

It catalyses the reaction (6R)-10-formyltetrahydrofolate + 5-amino-1-(5-phospho-beta-D-ribosyl)imidazole-4-carboxamide = 5-formamido-1-(5-phospho-D-ribosyl)imidazole-4-carboxamide + (6S)-5,6,7,8-tetrahydrofolate. The enzyme catalyses IMP + H2O = 5-formamido-1-(5-phospho-D-ribosyl)imidazole-4-carboxamide. It functions in the pathway purine metabolism; IMP biosynthesis via de novo pathway; 5-formamido-1-(5-phospho-D-ribosyl)imidazole-4-carboxamide from 5-amino-1-(5-phospho-D-ribosyl)imidazole-4-carboxamide (10-formyl THF route): step 1/1. It participates in purine metabolism; IMP biosynthesis via de novo pathway; IMP from 5-formamido-1-(5-phospho-D-ribosyl)imidazole-4-carboxamide: step 1/1. In Streptococcus mutans serotype c (strain ATCC 700610 / UA159), this protein is Bifunctional purine biosynthesis protein PurH.